Reading from the N-terminus, the 555-residue chain is MPSWIGAVILPLLGLLLSLPAGADVKARSCGEVRQAYGAKGFSLADIPYQEIAGEHLRICPQEYTCCTTEMEDKLSQQSKLEFENLVEETSHFVRTTFVSRHKKFDEFFRELLENAEKSLNDMFVRTYGMLYMQNSEVFQDLFTELKRYYTGGNVNLEEMLNDFWARLLERMFQLINPQYHFSEDYLECVSKYTDQLKPFGDVPRKLKIQVTRAFIAARTFVQGLTVGREVANRVSKVSPTPGCIRALMKMLYCPYCRGLPTVRPCNNYCLNVMKGCLANQADLDTEWNLFIDAMLLVAERLEGPFNIESVMDPIDVKISEAIMNMQENSMQVSAKVFQGCGQPKPAPALRSARSAPENFNTRFRPYNPEERPTTAAGTSLDRLVTDIKEKLKLSKKVWSSLPYTICKDESMTAGTSNEEECWNGHSKARYLPEIMNDGLTNQINNPEVDVDITRPDTFIRQQIMALRVMTNKLKNAYNGNDVNFQDTSDESSGSGSGSGCIDDVCPTEFEFVTTEAPAVDPDRREVDSSAAQRGHSLLSWSLTCIVLALQRLCR.

The N-terminal stretch at 1–23 (MPSWIGAVILPLLGLLLSLPAGA) is a signal peptide. Positions 348-357 (PALRSARSAP) are enriched in low complexity. A disordered region spans residues 348 to 376 (PALRSARSAPENFNTRFRPYNPEERPTTA). The GPI-anchor amidated serine moiety is linked to residue Ser-529. The propeptide at 530 to 555 (SAAQRGHSLLSWSLTCIVLALQRLCR) is removed in mature form.

It belongs to the glypican family.

The protein localises to the cell membrane. The protein resides in the secreted. Its subcellular location is the extracellular space. Its function is as follows. Cell surface proteoglycan that bears heparan sulfate. Putative cell surface coreceptor for growth factors, extracellular matrix proteins, proteases and anti-proteases. Enhances migration and invasion of cancer cells through WNT5A signaling. The chain is Glypican-6 (GPC6) from Pongo abelii (Sumatran orangutan).